The following is a 440-amino-acid chain: 26S proteasome regulatory subunit 4 (440 aa).

Over residues 1–13 the composition is skewed to gly residues; it reads MGQSQSGGHGPGG. Residues 1–49 are disordered; that stretch reads MGQSQSGGHGPGGGKKDDKDKKKKYEPPVPTRVGKKKKKTKGPDAASKL. Residue Gly2 is the site of N-myristoyl glycine attachment. Ser4 carries the phosphoserine modification. The segment covering 14-26 has biased composition (basic and acidic residues); the sequence is GKKDDKDKKKKYE. Thr53 carries the phosphothreonine modification. A disordered region spans residues 84 to 104; it reads QMKPLEEKQEEERSKVDDLRG. Basic and acidic residues predominate over residues 86 to 103; the sequence is KPLEEKQEEERSKVDDLR. Residue 226 to 233 participates in ATP binding; that stretch reads GPPGTGKT. A Glycyl lysine isopeptide (Lys-Gly) (interchain with G-Cter in ubiquitin) cross-link involves residue Lys237. Lys258 bears the N6-acetyllysine mark. A Phosphothreonine modification is found at Thr434. Residue Tyr439 is modified to Phosphotyrosine.

Belongs to the AAA ATPase family. Component of the 19S proteasome regulatory particle complex. The 26S proteasome consists of a 20S core particle (CP) and two 19S regulatory subunits (RP). The regulatory particle is made of a lid composed of 9 subunits, a base containing 6 ATPases including PSMC1 and few additional components. Interacts with SCA7. Interacts with NGLY1. Interacts with PAAF1.

It localises to the cytoplasm. It is found in the nucleus. The protein localises to the membrane. Component of the 26S proteasome, a multiprotein complex involved in the ATP-dependent degradation of ubiquitinated proteins. This complex plays a key role in the maintenance of protein homeostasis by removing misfolded or damaged proteins, which could impair cellular functions, and by removing proteins whose functions are no longer required. Therefore, the proteasome participates in numerous cellular processes, including cell cycle progression, apoptosis, or DNA damage repair. PSMC1 belongs to the heterohexameric ring of AAA (ATPases associated with diverse cellular activities) proteins that unfolds ubiquitinated target proteins that are concurrently translocated into a proteolytic chamber and degraded into peptides. The sequence is that of 26S proteasome regulatory subunit 4 (PSMC1) from Homo sapiens (Human).